The sequence spans 89 residues: Small ribosomal subunit protein uS15 (89 aa).

This sequence belongs to the universal ribosomal protein uS15 family. In terms of assembly, part of the 30S ribosomal subunit. Forms a bridge to the 50S subunit in the 70S ribosome, contacting the 23S rRNA.

Functionally, one of the primary rRNA binding proteins, it binds directly to 16S rRNA where it helps nucleate assembly of the platform of the 30S subunit by binding and bridging several RNA helices of the 16S rRNA. Forms an intersubunit bridge (bridge B4) with the 23S rRNA of the 50S subunit in the ribosome. The chain is Small ribosomal subunit protein uS15 from Ligilactobacillus salivarius (strain UCC118) (Lactobacillus salivarius).